The sequence spans 124 residues: MASLRYRRFLKLCEEWPVDETRVGRDLGAFIRQRVAQAFREGESTQVDDPDACDEMYASLNRMNTNYYREKYPRLQDTSFTEVTAEEYKMVLASDNLKQMEEMKKGMWKRLRDKFNVKPSEENS.

Residues methionine 1–cysteine 13 constitute a mitochondrion transit peptide.

The protein resides in the mitochondrion matrix. Its subcellular location is the mitochondrion nucleoid. It is found in the mitochondrion. Its function is as follows. Required for the assembly of the ubiquinol-cytochrome c reductase complex (mitochondrial respiratory chain complex III or cytochrome b-c1 complex). May play a role in the modulation of respiratory chain activities such as oxygen consumption and ATP production. May be involved in cytochrome b translation and/or stability. The protein is Ubiquinol-cytochrome-c reductase complex assembly factor 2 (uqcc2) of Xenopus tropicalis (Western clawed frog).